A 973-amino-acid chain; its full sequence is Short transient receptor potential channel 5 (973 aa).

The Cytoplasmic portion of the chain corresponds to 1-325 (MAQLYYKKVN…YDGFPGWRRK (325 aa)). ANK repeat units lie at residues 30–60 (SAEE…IYYN), 69–97 (LGRS…VYVG), 98–124 (DALL…PSGE), and 141–170 (PDIT…TIPR). Positions 172, 176, 178, and 181 each coordinate Zn(2+). The segment at residues 326 to 360 (HWVVKLLTCMTIGFLFPMLSIAYLISPRSNLGLFI) is an intramembrane region (discontinuously helical). The Cytoplasmic segment spans residues 361-363 (KKP). The chain crosses the membrane as a helical span at residues 364-384 (FIKFICHTASYLTFLFMLLLA). Over 385 to 404 (SQHIVRTDLHVQGPPPTVVE) the chain is Extracellular. Residues 405 to 419 (WMILPWVLGFIWGEI) traverse the membrane as a helical segment. Residues Glu418, Glu421, Asn436, and Asp439 each coordinate Ca(2+). The Cytoplasmic portion of the chain corresponds to 420-433 (KEMWDGGFTEYIHD). The chain crosses the membrane as a helical span at residues 434 to 454 (WWNLMDFAMNSLYLATISLKI). Over 455–476 (VAYVKYNGSRPREEWEMWHPTL) the chain is Extracellular. N-linked (GlcNAc...) asparagine glycosylation occurs at Asn461. Residues 477–497 (IAEALFAISNILSSLRLISLF) form a helical membrane-spanning segment. Over 498–512 (TANSHLGPLQISLGR) the chain is Cytoplasmic. Residues 513–535 (MLLDILKFLFIYCLVLLAFANGL) form a helical membrane-spanning segment. The Extracellular portion of the chain corresponds to 536–603 (NQLYFYYETR…HEFTEFVGAT (68 aa)). Cys553 and Cys558 form a disulfide bridge. A helical transmembrane segment spans residues 604-624 (MFGTYNVISLVVLLNMLIAMM). Residues 625–973 (NNSYQLIADH…GQEEQVTTRL (349 aa)) lie on the Cytoplasmic side of the membrane. 2 disordered regions span residues 766 to 794 (HPRS…RAKS) and 810 to 837 (GPPL…KRSF). Residues 971-973 (TRL) are essential for binding to NHERF1 PDZ domain.

This sequence belongs to the transient receptor (TC 1.A.4) family. STrpC subfamily. TRPC5 sub-subfamily. Homotetramer. Heterotetramer with TRPC1 and/or TRPC4. Each subunit in the homomeric ion channel (via ANK repeats) interacts with one copy of GTP-bound GNAI3; the interaction is direct and activates the ion channel. Interacts with TRPC4AP. Interacts with NHERF1. Interacts with MX1 and RNF24. Interacts (via C-terminus) with CABP1. Interacts with SESTD1 (via the spectrin 1 repeat). Interacts with PLSCR1. Interacts with PKD2L2. In terms of tissue distribution, expressed in brain with higher levels in fetal brain. Found in cerebellum and occipital pole.

It is found in the cell membrane. The enzyme catalyses Ca(2+)(in) = Ca(2+)(out). Activated by G-protein coupled receptors via direct interaction with GTP-bound GNAI3, which increases the channel sensitivity to phosphatidylinositol bisphosphate. May be activated by intracellular calcium store depletion. Calcium channel activity is enhanced by MYLK, that promotes its subcellular localization at the plasma membrane. Functionally, forms a receptor-activated non-selective calcium permeant cation channel. Mediates calcium-dependent phosphatidylserine externalization and apoptosis in neurons via its association with PLSCR1. Acts on distinct neuronal populations in the hypothalamus to regulate innate behaviors including feeding, anxiety (flight/fight/fear), socialization, and maternal care. This chain is Short transient receptor potential channel 5 (TRPC5), found in Homo sapiens (Human).